Here is a 349-residue protein sequence, read N- to C-terminus: Thiamine-phosphate synthase (349 aa).

The unknown stretch occupies residues 1–125 (MGCESSLDPR…SAEAAAIRYG (125 aa)). The interval 63 to 85 (RARSTVTDPGAGMEHPAQLDRHS) is disordered. Positions 126 to 349 (LYDLEVTCLT…LLSSLSRPTL (224 aa)) are thiamine-phosphate synthase. Residues 177–181 (QHRCK) and Asn-209 each bind 4-amino-2-methyl-5-(diphosphooxymethyl)pyrimidine. Mg(2+)-binding residues include Asp-210 and Asp-229. 4-amino-2-methyl-5-(diphosphooxymethyl)pyrimidine is bound by residues Ser-248 and Lys-277. Gly-304 lines the 2-[(2R,5Z)-2-carboxy-4-methylthiazol-5(2H)-ylidene]ethyl phosphate pocket.

This sequence belongs to the thiamine-phosphate synthase family. The cofactor is Mg(2+).

It catalyses the reaction 2-[(2R,5Z)-2-carboxy-4-methylthiazol-5(2H)-ylidene]ethyl phosphate + 4-amino-2-methyl-5-(diphosphooxymethyl)pyrimidine + 2 H(+) = thiamine phosphate + CO2 + diphosphate. The enzyme catalyses 2-(2-carboxy-4-methylthiazol-5-yl)ethyl phosphate + 4-amino-2-methyl-5-(diphosphooxymethyl)pyrimidine + 2 H(+) = thiamine phosphate + CO2 + diphosphate. It carries out the reaction 4-methyl-5-(2-phosphooxyethyl)-thiazole + 4-amino-2-methyl-5-(diphosphooxymethyl)pyrimidine + H(+) = thiamine phosphate + diphosphate. It participates in cofactor biosynthesis; thiamine diphosphate biosynthesis; thiamine phosphate from 4-amino-2-methyl-5-diphosphomethylpyrimidine and 4-methyl-5-(2-phosphoethyl)-thiazole: step 1/1. Functionally, condenses 4-methyl-5-(beta-hydroxyethyl)thiazole monophosphate (THZ-P) and 2-methyl-4-amino-5-hydroxymethyl pyrimidine pyrophosphate (HMP-PP) to form thiamine monophosphate (TMP). The sequence is that of Thiamine-phosphate synthase from Parasynechococcus marenigrum (strain WH8102).